Here is a 943-residue protein sequence, read N- to C-terminus: UvrABC system protein A (943 aa).

Residue 32 to 39 (GLSGSGKS) participates in ATP binding. The C4-type zinc finger occupies 251-278 (CPVCGFTVPELEPRLFSFNAPFGSCSEC). ABC transporter domains lie at 308 to 589 (WNPI…SKSI) and 609 to 937 (GNGR…HYLK). 641-648 (GVSGSGKS) provides a ligand contact to ATP. The C4-type zinc-finger motif lies at 740–766 (CEACSGDGIIKIEMHFLPDVYVACEVC).

Belongs to the ABC transporter superfamily. UvrA family. Forms a heterotetramer with UvrB during the search for lesions.

It is found in the cytoplasm. The UvrABC repair system catalyzes the recognition and processing of DNA lesions. UvrA is an ATPase and a DNA-binding protein. A damage recognition complex composed of 2 UvrA and 2 UvrB subunits scans DNA for abnormalities. When the presence of a lesion has been verified by UvrB, the UvrA molecules dissociate. This is UvrABC system protein A from Streptococcus pneumoniae serotype 4 (strain ATCC BAA-334 / TIGR4).